Here is a 451-residue protein sequence, read N- to C-terminus: Phosphoglucosamine mutase (451 aa).

Ser101 serves as the catalytic Phosphoserine intermediate. Residues Ser101, Asp243, Asp245, and Asp247 each coordinate Mg(2+). The residue at position 101 (Ser101) is a Phosphoserine.

The protein belongs to the phosphohexose mutase family. Mg(2+) serves as cofactor. In terms of processing, activated by phosphorylation.

The enzyme catalyses alpha-D-glucosamine 1-phosphate = D-glucosamine 6-phosphate. Its function is as follows. Catalyzes the conversion of glucosamine-6-phosphate to glucosamine-1-phosphate. The sequence is that of Phosphoglucosamine mutase from Geobacter metallireducens (strain ATCC 53774 / DSM 7210 / GS-15).